A 432-amino-acid chain; its full sequence is MDKLRIRGGRPLKGSIPISGAKNAALPLMAACLLTDGTLTLANLPHLADITTMANLLAQHGVDIRLNGHAQGGGGSQGRVVELTAATIASTTAPYDLVRKMRASVLVLGPLLARCGQAKVSLPGGCAIGPRPVDLHIKGLQAMGASIEIDGGYVIASAPAGGLRGAEIVFPQVSVGATENLMMAAALAKGETLLVNAAREPEITDLAHCLIAMGAEIEGAGTDRIRIRGRDRLSGAHHTIIPDRIETGTFAMAAAITGGEVELVGARLEHIKSVAKILSGAEIDFEETEAGLRVRRRNGVLLGVDVMTEPFPGFPTDLQAQMMALMCTCTGAAMITESIFENRFMHVPELARMGANITVHGASALVRGVPRLTGAPVMATDLRASVSLVIAGLAAAGETVVNRIYHLDRGYERIEEKLVACGADMERVRETD.

Residue 22–23 (KN) participates in phosphoenolpyruvate binding. Arg102 is a binding site for UDP-N-acetyl-alpha-D-glucosamine. The active-site Proton donor is the Cys126. Cys126 is subject to 2-(S-cysteinyl)pyruvic acid O-phosphothioketal. UDP-N-acetyl-alpha-D-glucosamine is bound by residues 131-135 (RPVDL), Asp317, and Ile339.

The protein belongs to the EPSP synthase family. MurA subfamily.

Its subcellular location is the cytoplasm. It carries out the reaction phosphoenolpyruvate + UDP-N-acetyl-alpha-D-glucosamine = UDP-N-acetyl-3-O-(1-carboxyvinyl)-alpha-D-glucosamine + phosphate. It participates in cell wall biogenesis; peptidoglycan biosynthesis. Its function is as follows. Cell wall formation. Adds enolpyruvyl to UDP-N-acetylglucosamine. This chain is UDP-N-acetylglucosamine 1-carboxyvinyltransferase, found in Rhodospirillum centenum (strain ATCC 51521 / SW).